Consider the following 424-residue polypeptide: Serine hydroxymethyltransferase (424 aa).

(6S)-5,6,7,8-tetrahydrofolate contacts are provided by residues L118 and 122-124; that span reads GHL. K227 is modified (N6-(pyridoxal phosphate)lysine). A (6S)-5,6,7,8-tetrahydrofolate-binding site is contributed by 351 to 353; sequence SPF.

The protein belongs to the SHMT family. In terms of assembly, homodimer. It depends on pyridoxal 5'-phosphate as a cofactor.

It localises to the cytoplasm. The catalysed reaction is (6R)-5,10-methylene-5,6,7,8-tetrahydrofolate + glycine + H2O = (6S)-5,6,7,8-tetrahydrofolate + L-serine. It participates in one-carbon metabolism; tetrahydrofolate interconversion. Its pathway is amino-acid biosynthesis; glycine biosynthesis; glycine from L-serine: step 1/1. Catalyzes the reversible interconversion of serine and glycine with tetrahydrofolate (THF) serving as the one-carbon carrier. This reaction serves as the major source of one-carbon groups required for the biosynthesis of purines, thymidylate, methionine, and other important biomolecules. Also exhibits THF-independent aldolase activity toward beta-hydroxyamino acids, producing glycine and aldehydes, via a retro-aldol mechanism. The sequence is that of Serine hydroxymethyltransferase from Pseudothermotoga lettingae (strain ATCC BAA-301 / DSM 14385 / NBRC 107922 / TMO) (Thermotoga lettingae).